Here is a 340-residue protein sequence, read N- to C-terminus: Glycerol-3-phosphate dehydrogenase [NAD(P)+] (340 aa).

Residues serine 11, tryptophan 12, arginine 33, and lysine 106 each coordinate NADPH. Residues lysine 106, glycine 137, and serine 139 each coordinate sn-glycerol 3-phosphate. Residue alanine 141 coordinates NADPH. Positions 192, 245, 255, 256, and 257 each coordinate sn-glycerol 3-phosphate. Lysine 192 serves as the catalytic Proton acceptor. Position 256 (arginine 256) interacts with NADPH. Positions 280 and 282 each coordinate NADPH.

It belongs to the NAD-dependent glycerol-3-phosphate dehydrogenase family.

Its subcellular location is the cytoplasm. It catalyses the reaction sn-glycerol 3-phosphate + NAD(+) = dihydroxyacetone phosphate + NADH + H(+). It carries out the reaction sn-glycerol 3-phosphate + NADP(+) = dihydroxyacetone phosphate + NADPH + H(+). The protein operates within membrane lipid metabolism; glycerophospholipid metabolism. Its function is as follows. Catalyzes the reduction of the glycolytic intermediate dihydroxyacetone phosphate (DHAP) to sn-glycerol 3-phosphate (G3P), the key precursor for phospholipid synthesis. This is Glycerol-3-phosphate dehydrogenase [NAD(P)+] from Bacillus cereus (strain G9842).